The chain runs to 485 residues: MAAPVERLAGVCAELEQWLGEESGQRNDWAEGEGIVWRLSELFREAQYRELAEPRIFRLILQILSRVSCEIKVATLPAGAFTDTHCQLPAECFRCLRNACVQCASNQDSVRNVGLIEESVRLIQIFGAPHVLQEPALVAFRCGLQFLGNTAAGNRDSQNAVWACAFPDLFLSCLVHDDEKVVTYSSMVLFTCINREKVSTLQDPSKLDVALSVVTAYSKYPDAEWMYLIVMDHFLLCPDLVKAVYLSQSSPERVTLLELILGKISQKEPLSAEESEALQAIAAFLSDCFQTQCKTILKLTSPSACDEEEPIVVTRLLDILCEVTSKNEHLSCLQTCPGLLEAAVDILRLTHLAGKQSMNVFTAAHTMSMGQDLTHAAVGFKAHLIRLIGNLCYQNKENQEKVYQLDGIALILDNCSIDDNNPFLNQWAVFAIRNLTENNDKNQELIASMERQGLADSSLLKSMGLQAEERDGKLLLKSVKKSPAL.

It belongs to the ataxin-10 family.

It localises to the cytoplasm. Its subcellular location is the perinuclear region. The protein resides in the midbody. In terms of biological role, may play a role in the regulation of cytokinesis. May play a role in signaling by stimulating protein glycosylation. Induces neuritogenesis by activating the Ras-MAP kinase pathway and is necessary for the survival of cerebellar neurons. Does not appear to play a major role in ciliogenesis. This chain is Ataxin-10 (atxn10), found in Xenopus tropicalis (Western clawed frog).